We begin with the raw amino-acid sequence, 479 residues long: ATP synthase subunit beta (479 aa).

153–160 contributes to the ATP binding site; that stretch reads GGAGVGKT.

This sequence belongs to the ATPase alpha/beta chains family. As to quaternary structure, F-type ATPases have 2 components, CF(1) - the catalytic core - and CF(0) - the membrane proton channel. CF(1) has five subunits: alpha(3), beta(3), gamma(1), delta(1), epsilon(1). CF(0) has three main subunits: a(1), b(2) and c(9-12). The alpha and beta chains form an alternating ring which encloses part of the gamma chain. CF(1) is attached to CF(0) by a central stalk formed by the gamma and epsilon chains, while a peripheral stalk is formed by the delta and b chains.

The protein localises to the cell membrane. It carries out the reaction ATP + H2O + 4 H(+)(in) = ADP + phosphate + 5 H(+)(out). In terms of biological role, produces ATP from ADP in the presence of a proton gradient across the membrane. The catalytic sites are hosted primarily by the beta subunits. This chain is ATP synthase subunit beta, found in Lactobacillus delbrueckii subsp. bulgaricus (strain ATCC BAA-365 / Lb-18).